Reading from the N-terminus, the 62-residue chain is MAVPRANTSKARTRRRRAVNMRLEAPHLVECGNCGNFVQSHRVCGRCGFYRGRQVINPDDLC.

It belongs to the bacterial ribosomal protein bL32 family.

The polypeptide is Large ribosomal subunit protein bL32 (rpmF) (Treponema pallidum (strain Nichols)).